Reading from the N-terminus, the 252-residue chain is Adenosine 5'-phosphosulfate reductase (252 aa).

Residues cysteine 125, cysteine 126, cysteine 208, and cysteine 211 each contribute to the [4Fe-4S] cluster site. The segment at 219–252 (DGYSREGRWSDRDKTECGLHTSPEDEDGAHAAES) is disordered. Residues 221-235 (YSREGRWSDRDKTEC) are compositionally biased toward basic and acidic residues. Cysteine 235 functions as the Nucleophile; cysteine thiosulfonate intermediate in the catalytic mechanism.

The protein belongs to the PAPS reductase family. CysH subfamily. Requires [4Fe-4S] cluster as cofactor.

It is found in the cytoplasm. It catalyses the reaction [thioredoxin]-disulfide + sulfite + AMP + 2 H(+) = adenosine 5'-phosphosulfate + [thioredoxin]-dithiol. The protein operates within sulfur metabolism; hydrogen sulfide biosynthesis; sulfite from sulfate. Its function is as follows. Catalyzes the formation of sulfite from adenosine 5'-phosphosulfate (APS) using thioredoxin as an electron donor. The polypeptide is Adenosine 5'-phosphosulfate reductase (Salinibacter ruber (strain DSM 13855 / M31)).